The chain runs to 695 residues: Elongation factor G (695 aa).

In terms of domain architecture, tr-type G spans 10–285 (AKTRNIGIMA…AVIDYLPSPI (276 aa)). Residues 19 to 26 (AHIDAGKT), 83 to 87 (DTPGH), and 137 to 140 (NKMD) contribute to the GTP site.

It belongs to the TRAFAC class translation factor GTPase superfamily. Classic translation factor GTPase family. EF-G/EF-2 subfamily.

The protein resides in the cytoplasm. Catalyzes the GTP-dependent ribosomal translocation step during translation elongation. During this step, the ribosome changes from the pre-translocational (PRE) to the post-translocational (POST) state as the newly formed A-site-bound peptidyl-tRNA and P-site-bound deacylated tRNA move to the P and E sites, respectively. Catalyzes the coordinated movement of the two tRNA molecules, the mRNA and conformational changes in the ribosome. This Limosilactobacillus reuteri (strain DSM 20016) (Lactobacillus reuteri) protein is Elongation factor G.